A 407-amino-acid polypeptide reads, in one-letter code: tRNA (guanine(9)-N1)-methyltransferase (407 aa).

The span at 1-19 shows a compositional bias: basic and acidic residues; the sequence is MDLDPAHKPSQAEETKEQG. Disordered stretches follow at residues 1–105 and 220–256; these read MDLD…VRKR and ENMI…PRPE. Positions 20-32 are enriched in low complexity; the sequence is NEQGQVEQNQAQQ. Basic residues predominate over residues 91-103; it reads LKRKDSRIARKVR. Residues 120 to 356 form the SAM-dependent MTase TRM10-type domain; it reads ANKQKPPSVN…SVIPKRKGGK (237 aa). S-adenosyl-L-methionine is bound by residues 263–264, G283, 287–291, C295, L309, and 321–323; these read LS, DKNRE, and TVL. The Proton acceptor role is filled by D287. Positions 353–407 are disordered; sequence KGGKLKEQQGASGETQETEEAEAEDPEEENEETKDPDAEASASKQNTPKVEVTSK. Residues 368 to 386 are compositionally biased toward acidic residues; the sequence is QETEEAEAEDPEEENEETK. Positions 394-407 are enriched in polar residues; the sequence is ASKQNTPKVEVTSK.

This sequence belongs to the class IV-like SAM-binding methyltransferase superfamily. TRM10 family. In terms of assembly, monomer.

Its subcellular location is the cytoplasm. The protein localises to the nucleus. The catalysed reaction is guanosine(9) in tRNA + S-adenosyl-L-methionine = N(1)-methylguanosine(9) in tRNA + S-adenosyl-L-homocysteine + H(+). S-adenosyl-L-methionine-dependent guanine N(1)-methyltransferase that catalyzes the formation of N(1)-methylguanine at position 9 (m1G9) in cytoplasmic tRNA. This chain is tRNA (guanine(9)-N1)-methyltransferase, found in Gibberella zeae (strain ATCC MYA-4620 / CBS 123657 / FGSC 9075 / NRRL 31084 / PH-1) (Wheat head blight fungus).